The chain runs to 452 residues: Probable ECA polymerase (452 aa).

Transmembrane regions (helical) follow at residues Phe6–Phe26, Val37–Leu57, Val63–Gly83, Val118–Leu138, Gly155–Leu175, Ala181–Gly201, Ile207–Trp227, Met228–Tyr248, Leu341–Ile361, Tyr378–Ala398, and Val410–Phe430.

Belongs to the WzyE family. In terms of assembly, probably part of a complex composed of WzxE, WzyE and WzzE.

The protein resides in the cell inner membrane. Its pathway is bacterial outer membrane biogenesis; enterobacterial common antigen biosynthesis. Functionally, probably involved in the polymerization of enterobacterial common antigen (ECA) trisaccharide repeat units. The sequence is that of Probable ECA polymerase from Salmonella agona (strain SL483).